A 121-amino-acid chain; its full sequence is Putative viral protein-binding protein C1 (121 aa).

The segment at 21–57 (PWDRTRGHPDVPWRNLTSSPTRPLAQPAGSCMPAEPS) is disordered.

As to quaternary structure, interacts with core protein of hepatitis B virus.

This Homo sapiens (Human) protein is Putative viral protein-binding protein C1.